Consider the following 252-residue polypeptide: dITP/XTP pyrophosphatase (252 aa).

7–12 (THNEGK) provides a ligand contact to substrate. The active-site Proton acceptor is Asp74. Asp74 provides a ligand contact to Mg(2+). Substrate-binding positions include Ser75 and 193-196 (FGYD). The tract at residues 202 to 229 (DDQPAGRVSTEPDHEGEPLTSAEMTPAE) is disordered. Substrate contacts are provided by residues Lys230 and 235–236 (HR).

It belongs to the HAM1 NTPase family. Homodimer. Mg(2+) serves as cofactor.

The catalysed reaction is XTP + H2O = XMP + diphosphate + H(+). The enzyme catalyses dITP + H2O = dIMP + diphosphate + H(+). It carries out the reaction ITP + H2O = IMP + diphosphate + H(+). Pyrophosphatase that catalyzes the hydrolysis of nucleoside triphosphates to their monophosphate derivatives, with a high preference for the non-canonical purine nucleotides XTP (xanthosine triphosphate), dITP (deoxyinosine triphosphate) and ITP. Seems to function as a house-cleaning enzyme that removes non-canonical purine nucleotides from the nucleotide pool, thus preventing their incorporation into DNA/RNA and avoiding chromosomal lesions. In Bifidobacterium longum (strain DJO10A), this protein is dITP/XTP pyrophosphatase.